The sequence spans 121 residues: Small ribosomal subunit protein uS13 (121 aa).

Positions R93 to K121 are disordered.

Belongs to the universal ribosomal protein uS13 family. Part of the 30S ribosomal subunit. Forms a loose heterodimer with protein S19. Forms two bridges to the 50S subunit in the 70S ribosome.

Its function is as follows. Located at the top of the head of the 30S subunit, it contacts several helices of the 16S rRNA. In the 70S ribosome it contacts the 23S rRNA (bridge B1a) and protein L5 of the 50S subunit (bridge B1b), connecting the 2 subunits; these bridges are implicated in subunit movement. Contacts the tRNAs in the A and P-sites. The polypeptide is Small ribosomal subunit protein uS13 (Paracidovorax citrulli (strain AAC00-1) (Acidovorax citrulli)).